We begin with the raw amino-acid sequence, 241 residues long: Probable transcriptional regulatory protein NE0210 (241 aa).

This sequence belongs to the TACO1 family.

The protein resides in the cytoplasm. This Nitrosomonas europaea (strain ATCC 19718 / CIP 103999 / KCTC 2705 / NBRC 14298) protein is Probable transcriptional regulatory protein NE0210.